A 208-amino-acid chain; its full sequence is Uracil phosphoribosyltransferase (208 aa).

Residues Arg-78, Arg-103, and 130-138 (DPMLATANS) contribute to the 5-phospho-alpha-D-ribose 1-diphosphate site. Uracil contacts are provided by residues Ile-193 and 198–200 (GDA). Residue Asp-199 participates in 5-phospho-alpha-D-ribose 1-diphosphate binding.

The protein belongs to the UPRTase family. Mg(2+) is required as a cofactor.

It catalyses the reaction UMP + diphosphate = 5-phospho-alpha-D-ribose 1-diphosphate + uracil. It functions in the pathway pyrimidine metabolism; UMP biosynthesis via salvage pathway; UMP from uracil: step 1/1. Allosterically activated by GTP. Its function is as follows. Catalyzes the conversion of uracil and 5-phospho-alpha-D-ribose 1-diphosphate (PRPP) to UMP and diphosphate. This is Uracil phosphoribosyltransferase from Brucella melitensis biotype 2 (strain ATCC 23457).